A 279-amino-acid polypeptide reads, in one-letter code: Putative carbamate hydrolase RutD (279 aa).

Residues 23–126 (PVVVLISGLG…LVSVNGWLRI (104 aa)) enclose the AB hydrolase-1 domain.

It belongs to the AB hydrolase superfamily. Hydrolase RutD family.

The catalysed reaction is carbamate + 2 H(+) = NH4(+) + CO2. Involved in pyrimidine catabolism. May facilitate the hydrolysis of carbamate, a reaction that can also occur spontaneously. This Escherichia coli O17:K52:H18 (strain UMN026 / ExPEC) protein is Putative carbamate hydrolase RutD.